The following is a 647-amino-acid chain: Leucine-rich repeat and WD repeat-containing protein 1 (647 aa).

LRR repeat units lie at residues 22-43, 48-69, 70-91, and 92-113; these read KIRS…PKLL, QLQE…LGLS, HLRV…CQFP, and KLEE…LKVS. The interval 204–267 is disordered; it reads RTQVQKANSP…GSPVAGSDGS (64 aa). 5 positions are modified to phosphoserine: Ser-212, Ser-243, Ser-251, Ser-259, and Ser-264. 7 WD repeats span residues 282-335, 341-379, 383-422, 426-472, 484-526, 542-582, and 598-646; these read HSKN…LHKY, EFFS…LLHV, FCCG…LWDI, NQDY…CWDV, EVEF…LWSW, VVLA…LYDV, and APTQ…IWGR.

This sequence belongs to the LRWD1 family. Integral component of the ORC complex. Directly interacts with CDT1, GMNN and ORC2. Interacts with ORC2 only when non-ubiquitinated; this interaction prevents LRWD1 ubiquitination and degradation. Some of these interactions are regulated in a cell-cycle dependent manner. Interaction with ORC1 occurs predominantly during G1. Association with phosphorylated ORC1 during mitosis is not efficient. Interaction with CDT1 occurs during G1 phase, as well as during mitosis with phosphorylated CDT1. Interaction with GMNN occurs from G1/S to mitosis. Interaction with ORC2 is observed throughout the cell cycle. The stoichiometry of the ORCA/ORC/CDT1/GMNN complex is 1:1:1:2. Interacts with CUL4A and DDB1; this interaction may lead to ubiquitination. Post-translationally, ubiquitinated; undergoes 'Lys-48'-linked polyubiquitination leading to proteasomal degradation. Ubiquitination occurs within the WD repeats at the end of the G1 phase. Ubiquitination may be catalyzed by the CUL4-DDB1 E3 ubiquitin-protein ligase complex and other E3 ligases. As to expression, testis-specific. Drastically down-regulated in testis from patients with Sertoli cell-only syndrome (SCOS).

The protein localises to the nucleus. The protein resides in the chromosome. It localises to the centromere. Its subcellular location is the telomere. It is found in the cytoplasm. The protein localises to the cytoskeleton. The protein resides in the microtubule organizing center. It localises to the centrosome. Its subcellular location is the kinetochore. Functionally, required for G1/S transition. Recruits and stabilizes the origin recognition complex (ORC) onto chromatin during G1 to establish pre-replication complex (preRC) and to heterochromatic sites in post-replicated cells. Binds a combination of DNA and histone methylation repressive marks on heterochromatin. Binds histone H3 and H4 trimethylation marks H3K9me3, H3K27me3 and H4K20me3 in a cooperative manner with DNA methylation. Required for silencing of major satellite repeats. May be important ORC2, ORC3 and ORC4 stability. In Homo sapiens (Human), this protein is Leucine-rich repeat and WD repeat-containing protein 1 (LRWD1).